The following is a 378-amino-acid chain: Ribosomal RNA large subunit methyltransferase G (378 aa).

The protein belongs to the methyltransferase superfamily. RlmG family.

The protein localises to the cytoplasm. The catalysed reaction is guanosine(1835) in 23S rRNA + S-adenosyl-L-methionine = N(2)-methylguanosine(1835) in 23S rRNA + S-adenosyl-L-homocysteine + H(+). Its function is as follows. Specifically methylates the guanine in position 1835 (m2G1835) of 23S rRNA. This Shewanella sp. (strain W3-18-1) protein is Ribosomal RNA large subunit methyltransferase G.